Reading from the N-terminus, the 129-residue chain is Probable tautomerase YrdN (129 aa).

Pro2 functions as the Proton acceptor; via imino nitrogen in the catalytic mechanism.

The protein belongs to the 4-oxalocrotonate tautomerase family.

Functionally, putative target of GltR. This chain is Probable tautomerase YrdN (yrdN), found in Bacillus subtilis (strain 168).